The following is a 318-amino-acid chain: Olfactory receptor 51E1 (318 aa).

Residues 1–31 (MMVDPNGNESSATYFILIGLPGLEEAQFWLA) are Extracellular-facing. N-linked (GlcNAc...) asparagine glycosylation is present at N8. Residues 32-52 (FPLCSLYLIAVLGNLTIIYIV) traverse the membrane as a helical segment. The Cytoplasmic portion of the chain corresponds to 53–60 (RTEHSLHE). Residues 61 to 81 (PMYIFLCMLSGIDILISTSSM) form a helical membrane-spanning segment. The Extracellular segment spans residues 82–100 (PKMLAIFWFNSTTIQFDAC). An N-linked (GlcNAc...) asparagine glycan is attached at N91. A disulfide bond links C100 and C182. Residues 101–123 (LLQMFAIHSLSGMESTVLLAMAF) form a helical membrane-spanning segment. Residues 124–145 (DRYVAICHPLRHATVLTLPRVT) lie on the Cytoplasmic side of the membrane. The helical transmembrane segment at 146-166 (KIGVAAVVRGAALMAPLPVFI) threads the bilayer. Residues 167-198 (KQLPFCRSNILSHSYCLHQDVMKLACDDIRVN) are Extracellular-facing. A helical membrane pass occupies residues 199–219 (VVYGLIVIISAIGLDSLLISF). Topologically, residues 220–239 (SYLLILKTVLGLTREAQAKA) are cytoplasmic. Residues 240–260 (FGTCVSHVCAVFIFYVPFIGL) form a helical membrane-spanning segment. Residues 261–275 (SMVHRFSKRRDSPLP) lie on the Extracellular side of the membrane. Residues 276 to 296 (VILANIYLLVPPVLNPIVYGV) form a helical membrane-spanning segment. At 297–318 (KTKEIRQRILRLFHVATHASEP) the chain is on the cytoplasmic side.

It belongs to the G-protein coupled receptor 1 family. Highly expressed in prostate. Very low levels may be detected in some other tissues, such as placenta, skeletal muscle, heart, ovary and testis. Up-regulated in prostate cancers.

The protein resides in the cell membrane. Odorant receptor. This is Olfactory receptor 51E1 (OR51E1) from Homo sapiens (Human).